The chain runs to 594 residues: Apolipoprotein N-acyltransferase (594 aa).

Residues 1–29 show a composition bias toward acidic residues; the sequence is MIPAVTDDDPLEDPLDDDVAPGLDDAEPE. The tract at residues 1–48 is disordered; it reads MIPAVTDDDPLEDPLDDDVAPGLDDAEPEPEPRDEHDEPSRPATGSRI. Residues 1–67 are Cytoplasmic-facing; it reads MIPAVTDDDP…RFGKGVLDRC (67 aa). Positions 30-40 are enriched in basic and acidic residues; that stretch reads PEPRDEHDEPS. A helical membrane pass occupies residues 68-87; the sequence is APLSAAIGGGLALWLSFPPI. At 88–116 the chain is on the extracellular side; that stretch reads GWWFTAFPGLALLGWVLTRTATTKAGGFG. The helical transmembrane segment at 117-134 threads the bilayer; the sequence is YGVLFGLAFYVPLLPWIS. Over 135 to 138 the chain is Cytoplasmic; it reads GLVG. Residues 139–160 form a helical membrane-spanning segment; sequence AVPWLALAFAESLFCGLFGLGA. Residues 161–221 are Extracellular-facing; sequence VVVVRLPGWP…IGGAPLVSFA (61 aa). Residues 222 to 239 traverse the membrane as a helical segment; that stretch reads VALIGFSLTLLTAQIVWW. Over 240–251 the chain is Cytoplasmic; the sequence is WRHGHKPGVPAP. Residues 252 to 269 traverse the membrane as a helical segment; sequence AVMLPGVAIAASLLVTAL. Residues 270–554 lie on the Extracellular side of the membrane; the sequence is VWPQVRQSGT…TDLTPATKWG (285 aa). The 257-residue stretch at 287–543 folds into the CN hydrolase domain; it reads VTVAAVQGNV…PAYLDNQIRL (257 aa). The active-site Proton acceptor is the Glu-340. Lys-405 is a catalytic residue. The active-site Nucleophile is Cys-455. Residues 555 to 572 traverse the membrane as a helical segment; sequence PIVQAVLVIAGVAVLLIA. Topologically, residues 573 to 594 are cytoplasmic; that stretch reads ILHNGRFAPRMLRRRSATTVKR.

Belongs to the CN hydrolase family. Apolipoprotein N-acyltransferase subfamily. As to quaternary structure, interacts with Ppm1 (AC A0QZ12) upon coexpression in E.coli, which increases the PPM synthase activity of Ppm1.

It localises to the cell membrane. The enzyme catalyses N-terminal S-1,2-diacyl-sn-glyceryl-L-cysteinyl-[lipoprotein] + a glycerophospholipid = N-acyl-S-1,2-diacyl-sn-glyceryl-L-cysteinyl-[lipoprotein] + a 2-acyl-sn-glycero-3-phospholipid + H(+). It functions in the pathway protein modification; lipoprotein biosynthesis (N-acyl transfer). In terms of biological role, catalyzes the phospholipid dependent N-acylation of the N-terminal cysteine of apolipoprotein, the last step in lipoprotein maturation. Can transfer a number of fatty acids (C16 and C19, palmitic and probably tuberculostearic acids respectively are shown). Enhances the polyprenol monophosphomannose (PPM) synthase activity of Ppm1 (AC A0QZ12) without itself having PPM synthase catalytic activity. The chain is Apolipoprotein N-acyltransferase from Mycolicibacterium smegmatis (strain ATCC 700084 / mc(2)155) (Mycobacterium smegmatis).